Here is a 296-residue protein sequence, read N- to C-terminus: 3-methyl-2-oxobutanoate hydroxymethyltransferase (296 aa).

Residues 1-14 (MTAPTPTPANAATP) show a composition bias toward low complexity. A disordered region spans residues 1–29 (MTAPTPTPANAATPYGTLPPASPLPQRRP). Mg(2+) contacts are provided by Asp71 and Asp114. 3-methyl-2-oxobutanoate-binding positions include 71-72 (DS), Asp114, and Lys143. Glu145 serves as a coordination point for Mg(2+). Glu212 (proton acceptor) is an active-site residue.

This sequence belongs to the PanB family. In terms of assembly, homodecamer; pentamer of dimers. The cofactor is Mg(2+).

It is found in the cytoplasm. The enzyme catalyses 3-methyl-2-oxobutanoate + (6R)-5,10-methylene-5,6,7,8-tetrahydrofolate + H2O = 2-dehydropantoate + (6S)-5,6,7,8-tetrahydrofolate. Its pathway is cofactor biosynthesis; (R)-pantothenate biosynthesis; (R)-pantoate from 3-methyl-2-oxobutanoate: step 1/2. Functionally, catalyzes the reversible reaction in which hydroxymethyl group from 5,10-methylenetetrahydrofolate is transferred onto alpha-ketoisovalerate to form ketopantoate. This chain is 3-methyl-2-oxobutanoate hydroxymethyltransferase, found in Paracidovorax citrulli (strain AAC00-1) (Acidovorax citrulli).